Consider the following 378-residue polypeptide: Protein SLG1 (378 aa).

A signal peptide spans 1-21; the sequence is MRPNKTSLLLALLSILSQANA. The WSC domain maps to 22–110; the sequence is YEYVNCFSSL…EDAYSVYQLD (89 aa). Residues 22–264 lie on the Extracellular side of the membrane; that stretch reads YEYVNCFSSL…THKKKANVGA (243 aa). Residue Asn-65 is glycosylated (N-linked (GlcNAc...) asparagine). Disordered stretches follow at residues 115–201 and 236–256; these read SNSI…TSST and QNSG…SKTH. Residues 236–253 show a composition bias toward low complexity; that stretch reads QNSGSATGTAGSDSTSGS. Residues 265–285 form a helical membrane-spanning segment; it reads IVGGVVGGVVGAVAIALCILL. Residues 286–378 are Cytoplasmic-facing; the sequence is IVRHINMKRE…LTVVNPDEAD (93 aa). The tract at residues 318–378 is disordered; the sequence is ASSFSSNHGP…LTVVNPDEAD (61 aa). Low complexity predominate over residues 319-331; the sequence is SSFSSNHGPSSGS. 2 positions are modified to phosphoserine: Ser-331 and Ser-353.

Glycosylated. Phosphorylated. Phosphorylation serves a negative regulatory role.

It localises to the cell membrane. Plays a role during G1 to regulate entering or exiting the cell cycle. Involved in stress responses. Has a role in cell wall integrity signaling. Activates ROM1 or ROM2 catalyzed guanine nucleotide exchange toward RHO1. Important regulator of the actin cytoskeleton rearrangements in conditions of cell wall expansion and membrane stretching. Specifically required for the actin reorganization induced by hypo-osmotic shock. Multicopy suppressor of 1,3-beta-glucan synthase (GS). Activates GS upstream of RHO1. Acts positively on the PKC1-MAPK pathway. Activates transiently SLT2 during alkaline stress, which leads to an increase in the expression of several specific genes. This is Protein SLG1 (SLG1) from Saccharomyces cerevisiae (strain ATCC 204508 / S288c) (Baker's yeast).